A 264-amino-acid polypeptide reads, in one-letter code: tRNA pseudouridine synthase A (264 aa).

The active-site Nucleophile is the Asp-51. Tyr-109 is a binding site for substrate.

It belongs to the tRNA pseudouridine synthase TruA family. Homodimer.

The enzyme catalyses uridine(38/39/40) in tRNA = pseudouridine(38/39/40) in tRNA. Its function is as follows. Formation of pseudouridine at positions 38, 39 and 40 in the anticodon stem and loop of transfer RNAs. The sequence is that of tRNA pseudouridine synthase A from Polaromonas sp. (strain JS666 / ATCC BAA-500).